The chain runs to 76 residues: Sec-independent protein translocase protein TatA (76 aa).

The helical transmembrane segment at methionine 1–glycine 21 threads the bilayer. Composition is skewed to basic and acidic residues over residues aspartate 41 to glycine 50 and lysine 57 to glutamine 76. Positions aspartate 41–glutamine 76 are disordered.

It belongs to the TatA/E family. As to quaternary structure, the Tat system comprises two distinct complexes: a TatABC complex, containing multiple copies of TatA, TatB and TatC subunits, and a separate TatA complex, containing only TatA subunits. Substrates initially bind to the TatABC complex, which probably triggers association of the separate TatA complex to form the active translocon.

Its subcellular location is the cell inner membrane. Part of the twin-arginine translocation (Tat) system that transports large folded proteins containing a characteristic twin-arginine motif in their signal peptide across membranes. TatA could form the protein-conducting channel of the Tat system. The protein is Sec-independent protein translocase protein TatA of Cupriavidus taiwanensis (strain DSM 17343 / BCRC 17206 / CCUG 44338 / CIP 107171 / LMG 19424 / R1) (Ralstonia taiwanensis (strain LMG 19424)).